We begin with the raw amino-acid sequence, 164 residues long: Transcription elongation factor GreA (164 aa).

The protein belongs to the GreA/GreB family.

In terms of biological role, necessary for efficient RNA polymerase transcription elongation past template-encoded arresting sites. The arresting sites in DNA have the property of trapping a certain fraction of elongating RNA polymerases that pass through, resulting in locked ternary complexes. Cleavage of the nascent transcript by cleavage factors such as GreA or GreB allows the resumption of elongation from the new 3'terminus. GreA releases sequences of 2 to 3 nucleotides. This is Transcription elongation factor GreA from Helicobacter pylori (strain J99 / ATCC 700824) (Campylobacter pylori J99).